The chain runs to 276 residues: Phospholipid phosphatase 2 (276 aa).

Residues 1–4 (MERR) lie on the Cytoplasmic side of the membrane. The helical transmembrane segment at 5–25 (WVFVLLDVLCVLVASLPFIIL) threads the bilayer. Topologically, residues 26–51 (TLVNAPYKRGFYCGDDSIRYPYRPDT) are lumenal. Residues 52–72 (ITHGLMAGVIITATVVLVSSG) form a helical membrane-spanning segment. Over 73–87 (EAYLVYTDRLYSRSD) the chain is Cytoplasmic. Residues 88–108 (FNNYVAAIYKVLGTFLFGAAV) form a helical membrane-spanning segment. The Lumenal portion of the chain corresponds to 109-161 (SQSLTDLAKYMIGRLRPSFLAVCDPDWSRVNCSGYVQVEVCRGSPANVTEARL). Residues 117-125 (KYMIGRLRP) are phosphatase sequence motif I. Residues Asn-139 and Asn-155 are each glycosylated (N-linked (GlcNAc...) asparagine). Residues 162–182 (SFYSGHSSFGMYCMLFLALYV) traverse the membrane as a helical segment. The interval 164 to 167 (YSGH) is phosphatase sequence motif II. His-167 (proton donors) is an active-site residue. Over 183–189 (QARLCWK) the chain is Cytoplasmic. Residues 190-210 (WARLLRPTVQFFLVAFAIYVG) form a helical membrane-spanning segment. At 211 to 225 (YTRVSDNKHHWSDVL) the chain is on the lumenal side. The phosphatase sequence motif III stretch occupies residues 212–223 (TRVSDNKHHWSD). Residue His-219 is the Nucleophile of the active site. The helical transmembrane segment at 226-246 (VGLLQGALVACLTVCYVSDFF) threads the bilayer. Topologically, residues 247-276 (KSRPPQSCQENEESERKPSLSLTLTLGDRP) are cytoplasmic. Residues 252–276 (QSCQENEESERKPSLSLTLTLGDRP) are disordered.

It belongs to the PA-phosphatase related phosphoesterase family. In terms of assembly, forms functional homodimers and homooligomers. Can also form heterooligomers with PLPP1 and PLPP3. In terms of processing, N-glycosylated. In terms of tissue distribution, expressed in the brain.

The protein resides in the membrane. The protein localises to the cell membrane. It is found in the early endosome membrane. Its subcellular location is the endoplasmic reticulum membrane. The enzyme catalyses a 1,2-diacyl-sn-glycero-3-phosphate + H2O = a 1,2-diacyl-sn-glycerol + phosphate. It catalyses the reaction 1,2-dihexadecanoyl-sn-glycero-3-phosphate + H2O = 1,2-dihexadecanoyl-sn-glycerol + phosphate. The catalysed reaction is 1,2-di-(9Z-octadecenoyl)-sn-glycero-3-phosphate + H2O = 1,2-di-(9Z-octadecenoyl)-sn-glycerol + phosphate. It carries out the reaction a monoacyl-sn-glycero-3-phosphate + H2O = a monoacylglycerol + phosphate. The enzyme catalyses (9Z)-octadecenoyl-sn-glycero-3-phosphate + H2O = (9Z-octadecenoyl)-glycerol + phosphate. It catalyses the reaction sphing-4-enine 1-phosphate + H2O = sphing-4-enine + phosphate. The catalysed reaction is an N-acylsphing-4-enine 1-phosphate + H2O = an N-acylsphing-4-enine + phosphate. It carries out the reaction N-(octanoyl)-sphing-4-enine-1-phosphate + H2O = N-octanoylsphing-4-enine + phosphate. The enzyme catalyses N-(9Z-octadecenoyl)-ethanolamine phosphate + H2O = N-(9Z-octadecenoyl) ethanolamine + phosphate. Its pathway is lipid metabolism; phospholipid metabolism. Its activity is regulated as follows. Magnesium-independent phospholipid phosphatase. Insensitive to N-ethylmaleimide. Functionally, magnesium-independent phospholipid phosphatase that catalyzes the dephosphorylation of a variety of glycerolipid and sphingolipid phosphate esters including phosphatidate/PA, lysophosphatidate/LPA, sphingosine 1-phosphate/S1P and ceramide 1-phosphate/C1P. Has no apparent extracellular phosphatase activity and therefore most probably acts intracellularly. Also acts on N-oleoyl ethanolamine phosphate/N-(9Z-octadecenoyl)-ethanolamine phosphate, a potential physiological compound. Through dephosphorylation of these bioactive lipid mediators produces new bioactive compounds and may regulate signal transduction in different cellular processes. Indirectly regulates, for instance, cell cycle G1/S phase transition through its phospholipid phosphatase activity. In Rattus norvegicus (Rat), this protein is Phospholipid phosphatase 2.